We begin with the raw amino-acid sequence, 332 residues long: Probable endo-beta-1,4-glucanase B (332 aa).

A signal peptide spans 1-18 (MKFQSTLLLAAAAGSALA). Asn-38 and Asn-100 each carry an N-linked (GlcNAc...) asparagine glycan. The Proton donor role is filled by Glu-160. A glycan (N-linked (GlcNAc...) asparagine) is linked at Asn-212. Glu-267 functions as the Nucleophile in the catalytic mechanism. N-linked (GlcNAc...) asparagine glycosylation occurs at Asn-289.

This sequence belongs to the glycosyl hydrolase 5 (cellulase A) family.

The protein localises to the secreted. The enzyme catalyses Endohydrolysis of (1-&gt;4)-beta-D-glucosidic linkages in cellulose, lichenin and cereal beta-D-glucans.. In terms of biological role, has endoglucanase activity on substrates containing beta-1,4 glycosidic bonds, like in carboxymethylcellulose (CMC), hydroxyethylcellulose (HEC) and beta-glucan. Involved in the degradation of complex natural cellulosic substrates. In Aspergillus kawachii (strain NBRC 4308) (White koji mold), this protein is Probable endo-beta-1,4-glucanase B (eglB).